The following is a 129-amino-acid chain: Large ribosomal subunit protein bL12c (129 aa).

The span at 101–123 (KPIKEGMSKADAEAGKKQLEEAG) shows a compositional bias: basic and acidic residues. The segment at 101–129 (KPIKEGMSKADAEAGKKQLEEAGAKATLK) is disordered.

Belongs to the bacterial ribosomal protein bL12 family. As to quaternary structure, homodimer. Part of the ribosomal stalk of the 50S ribosomal subunit. Forms a multimeric L10(L12)X complex, where L10 forms an elongated spine to which 2 to 4 L12 dimers bind in a sequential fashion. Binds GTP-bound translation factors.

It is found in the plastid. Its subcellular location is the chloroplast. In terms of biological role, forms part of the ribosomal stalk which helps the ribosome interact with GTP-bound translation factors. Is thus essential for accurate translation. This Guillardia theta (Cryptophyte) protein is Large ribosomal subunit protein bL12c.